The following is a 107-amino-acid chain: Large ribosomal subunit protein P1 (107 aa).

Positions 67 to 82 (PTATSAAAAPAAGEAS) are enriched in low complexity. The segment at 67 to 107 (PTATSAAAAPAAGEASGKAEEKKKEEPEEEGDDDMGFGLFD) is disordered. Over residues 83–92 (GKAEEKKKEE) the composition is skewed to basic and acidic residues.

This sequence belongs to the eukaryotic ribosomal protein P1/P2 family. In terms of assembly, P1 and P2 exist as dimers at the large ribosomal subunit.

Functionally, plays an important role in the elongation step of protein synthesis. The polypeptide is Large ribosomal subunit protein P1 (Leishmania peruviana).